A 329-amino-acid polypeptide reads, in one-letter code: Oxidoreductase sirO (329 aa).

D54 contacts NADP(+). The active-site Proton donor is the Y59. H118 serves as a coordination point for substrate. Residues 148 to 149 (SN), Q174, 203 to 213 (SPLCCGLLINA), and 288 to 296 (SSARQLEES) each bind NADP(+).

It belongs to the aldo/keto reductase family. Aldo/keto reductase 2 subfamily.

Its pathway is mycotoxin biosynthesis. Oxidoreductase; part of the gene cluster that mediates the biosynthesis of sirodesmin PL, an epipolythiodioxopiperazine (ETP) characterized by a disulfide bridged cyclic dipeptide and that acts as a phytotoxin which is involved in the blackleg didease of canola. SirD catalyzes the O-prenylation of L-tyrosine (L-Tyr) in the presence of dimethylallyl diphosphate (DMAPP) to yield 4-O-dimethylallyl-L-Tyr, and therefore represents probably the first pathway-specific enzyme in the biosynthesis of sirodesmin PL. 4-O-dimethylallyl-L-Tyr, then undergoes condensation with L-Ser in a reaction catalyzed by the non-ribosomal peptide synthase sirP to form the diketopiperazine (DKP) backbone. Further bishydroxylation of the DKP performed by the cytochrome P450 monooxygenase sirC leads to the production of the intermediate phomamide. This step is essential to form the reactive thiol group required for toxicity of sirodesmin PL. The next steps of sirodesmin biosynthesis are not well understood yet, but some predictions could be made from intermediate compounds identification. Phomamide is converted into phomalizarine via oxidation, probably by sirT. Further oxidation, methylation (by sirM or sirN) and reduction steps convert phomalizarine to deacetyl sirodesmin. Finally, acetyltransferase sirH probably acetylates deacetyl sirodesmin to produce sirodesmin PL. The sequence is that of Oxidoreductase sirO from Leptosphaeria maculans (Blackleg fungus).